We begin with the raw amino-acid sequence, 392 residues long: Succinate--CoA ligase [ADP-forming] subunit beta (392 aa).

Positions 9–248 (KDILRKFGVA…ISEEDPFEVE (240 aa)) constitute an ATP-grasp domain. Residues K50, 57 to 59 (GRG), E103, M106, and E111 each bind ATP. 2 residues coordinate Mg(2+): N203 and D217. Substrate-binding positions include N268 and 325–327 (GIV).

Belongs to the succinate/malate CoA ligase beta subunit family. As to quaternary structure, heterotetramer of two alpha and two beta subunits. It depends on Mg(2+) as a cofactor.

The enzyme catalyses succinate + ATP + CoA = succinyl-CoA + ADP + phosphate. It catalyses the reaction GTP + succinate + CoA = succinyl-CoA + GDP + phosphate. Its pathway is carbohydrate metabolism; tricarboxylic acid cycle; succinate from succinyl-CoA (ligase route): step 1/1. Its function is as follows. Succinyl-CoA synthetase functions in the citric acid cycle (TCA), coupling the hydrolysis of succinyl-CoA to the synthesis of either ATP or GTP and thus represents the only step of substrate-level phosphorylation in the TCA. The beta subunit provides nucleotide specificity of the enzyme and binds the substrate succinate, while the binding sites for coenzyme A and phosphate are found in the alpha subunit. This chain is Succinate--CoA ligase [ADP-forming] subunit beta, found in Chlorobium phaeobacteroides (strain DSM 266 / SMG 266 / 2430).